A 288-amino-acid chain; its full sequence is Bifunctional protein FolD (288 aa).

Residues 166–168 (GAS) and isoleucine 232 contribute to the NADP(+) site.

Belongs to the tetrahydrofolate dehydrogenase/cyclohydrolase family. Homodimer.

It catalyses the reaction (6R)-5,10-methylene-5,6,7,8-tetrahydrofolate + NADP(+) = (6R)-5,10-methenyltetrahydrofolate + NADPH. It carries out the reaction (6R)-5,10-methenyltetrahydrofolate + H2O = (6R)-10-formyltetrahydrofolate + H(+). It participates in one-carbon metabolism; tetrahydrofolate interconversion. Its function is as follows. Catalyzes the oxidation of 5,10-methylenetetrahydrofolate to 5,10-methenyltetrahydrofolate and then the hydrolysis of 5,10-methenyltetrahydrofolate to 10-formyltetrahydrofolate. In Salmonella arizonae (strain ATCC BAA-731 / CDC346-86 / RSK2980), this protein is Bifunctional protein FolD.